The following is a 416-amino-acid chain: Gamma-glutamyl phosphate reductase (416 aa).

This sequence belongs to the gamma-glutamyl phosphate reductase family.

The protein localises to the cytoplasm. The catalysed reaction is L-glutamate 5-semialdehyde + phosphate + NADP(+) = L-glutamyl 5-phosphate + NADPH + H(+). The protein operates within amino-acid biosynthesis; L-proline biosynthesis; L-glutamate 5-semialdehyde from L-glutamate: step 2/2. Functionally, catalyzes the NADPH-dependent reduction of L-glutamate 5-phosphate into L-glutamate 5-semialdehyde and phosphate. The product spontaneously undergoes cyclization to form 1-pyrroline-5-carboxylate. The protein is Gamma-glutamyl phosphate reductase of Streptococcus thermophilus (strain CNRZ 1066).